The following is a 259-amino-acid chain: Short-chain dehydrogenase reductase 5 (259 aa).

NAD(+) is bound at residue 12–36 (IITGGASGIGAEAARLFTDHGAKVV). A substrate-binding site is contributed by Ser-144. Tyr-157 acts as the Proton acceptor in catalysis.

Belongs to the short-chain dehydrogenases/reductases (SDR) family.

This chain is Short-chain dehydrogenase reductase 5 (SDR5), found in Arabidopsis thaliana (Mouse-ear cress).